The sequence spans 127 residues: Large ribosomal subunit protein bL12 (127 aa).

The segment at Val-94–Lys-114 is disordered. Residues Ala-104 to Lys-114 are compositionally biased toward basic and acidic residues.

The protein belongs to the bacterial ribosomal protein bL12 family. Homodimer. Part of the ribosomal stalk of the 50S ribosomal subunit. Forms a multimeric L10(L12)X complex, where L10 forms an elongated spine to which 2 to 4 L12 dimers bind in a sequential fashion. Binds GTP-bound translation factors.

Forms part of the ribosomal stalk which helps the ribosome interact with GTP-bound translation factors. Is thus essential for accurate translation. This Nitratidesulfovibrio vulgaris (strain ATCC 29579 / DSM 644 / CCUG 34227 / NCIMB 8303 / VKM B-1760 / Hildenborough) (Desulfovibrio vulgaris) protein is Large ribosomal subunit protein bL12.